The primary structure comprises 583 residues: Ribosomal lysine N-methyltransferase 1 (583 aa).

Residues 22 to 274 (EELKFLYTDL…QSRELSNNYG (253 aa)) enclose the SET domain. Tyrosine 273 is a binding site for S-adenosyl-L-methionine. 2 coiled-coil regions span residues 378-407 (KAEE…KLNS) and 433-459 (KGQK…ENKH).

Belongs to the class V-like SAM-binding methyltransferase superfamily. RKM1 family.

It is found in the cytoplasm. The protein resides in the nucleus. In terms of biological role, S-adenosyl-L-methionine-dependent protein-lysine N-methyltransferase that monomethylates ribosomal protein S18 (RPS18A and RPS18B) at 'Lys-48' and dimethylates ribosomal protein L23 (RPL23A and RPL23B) at 'Lys-106' and 'Lys-110'. The chain is Ribosomal lysine N-methyltransferase 1 from Saccharomyces cerevisiae (strain ATCC 204508 / S288c) (Baker's yeast).